The chain runs to 228 residues: Pyridoxal phosphate homeostasis protein (228 aa).

At K35 the chain carries N6-(pyridoxal phosphate)lysine.

It belongs to the pyridoxal phosphate-binding protein YggS/PROSC family.

Pyridoxal 5'-phosphate (PLP)-binding protein, which is involved in PLP homeostasis. This chain is Pyridoxal phosphate homeostasis protein, found in Aquifex aeolicus (strain VF5).